A 213-amino-acid chain; its full sequence is Adenylate kinase (213 aa).

10–15 (GAGKGT) is an ATP binding site. An NMP region spans residues 30-59 (STGDMFRAAMANQTEMGILAKSYIDKGDLV). AMP contacts are provided by residues threonine 31, arginine 36, 57–59 (DLV), 86–89 (GYPR), and glutamine 93. The tract at residues 127–160 (GRIIHKETGETFHKVFNPPVGDYKEEDFYQREDD) is LID. Residues arginine 128 and 137–138 (TF) contribute to the ATP site. Residues arginine 157 and arginine 168 each coordinate AMP. Glutamine 196 contributes to the ATP binding site.

The protein belongs to the adenylate kinase family. In terms of assembly, monomer.

It is found in the cytoplasm. The catalysed reaction is AMP + ATP = 2 ADP. Its pathway is purine metabolism; AMP biosynthesis via salvage pathway; AMP from ADP: step 1/1. Catalyzes the reversible transfer of the terminal phosphate group between ATP and AMP. Plays an important role in cellular energy homeostasis and in adenine nucleotide metabolism. The protein is Adenylate kinase of Streptococcus suis (strain 98HAH33).